Here is a 253-residue protein sequence, read N- to C-terminus: Imidazole glycerol phosphate synthase subunit HisF (253 aa).

Catalysis depends on residues D11 and D130.

This sequence belongs to the HisA/HisF family. As to quaternary structure, heterodimer of HisH and HisF.

It is found in the cytoplasm. It carries out the reaction 5-[(5-phospho-1-deoxy-D-ribulos-1-ylimino)methylamino]-1-(5-phospho-beta-D-ribosyl)imidazole-4-carboxamide + L-glutamine = D-erythro-1-(imidazol-4-yl)glycerol 3-phosphate + 5-amino-1-(5-phospho-beta-D-ribosyl)imidazole-4-carboxamide + L-glutamate + H(+). The protein operates within amino-acid biosynthesis; L-histidine biosynthesis; L-histidine from 5-phospho-alpha-D-ribose 1-diphosphate: step 5/9. In terms of biological role, IGPS catalyzes the conversion of PRFAR and glutamine to IGP, AICAR and glutamate. The HisF subunit catalyzes the cyclization activity that produces IGP and AICAR from PRFAR using the ammonia provided by the HisH subunit. The polypeptide is Imidazole glycerol phosphate synthase subunit HisF (Clostridium botulinum (strain Langeland / NCTC 10281 / Type F)).